The primary structure comprises 288 residues: 4-diphosphocytidyl-2-C-methyl-D-erythritol kinase (288 aa).

The active site involves Lys-8. 92-102 (PVAAGMAGGST) contacts ATP. Asp-134 is a catalytic residue.

The protein belongs to the GHMP kinase family. IspE subfamily.

The catalysed reaction is 4-CDP-2-C-methyl-D-erythritol + ATP = 4-CDP-2-C-methyl-D-erythritol 2-phosphate + ADP + H(+). Its pathway is isoprenoid biosynthesis; isopentenyl diphosphate biosynthesis via DXP pathway; isopentenyl diphosphate from 1-deoxy-D-xylulose 5-phosphate: step 3/6. Functionally, catalyzes the phosphorylation of the position 2 hydroxy group of 4-diphosphocytidyl-2C-methyl-D-erythritol. This is 4-diphosphocytidyl-2-C-methyl-D-erythritol kinase from Clostridium perfringens (strain 13 / Type A).